The chain runs to 715 residues: Palmitoyltransferase ZDHHC5 (715 aa).

Residues 1–13 are Cytoplasmic-facing; that stretch reads MPAESGKRFKPSK. The chain crosses the membrane as a helical span at residues 14–34; sequence YVPVSAAAIFLVGATTLFFAF. The Extracellular portion of the chain corresponds to 35–52; sequence TCPGLSLDVSPAVPIYNA. The helical transmembrane segment at 53–73 threads the bilayer; the sequence is IMFLFVLANFSMATFMDPGIF. Over 74-148 the chain is Cytoplasmic; sequence PRAEEDEDKE…NCIGRRNYRY (75 aa). Tyrosine 91 is subject to Phosphotyrosine. The DHHC domain maps to 104–154; that stretch reads KWCATCRFYRPPRCSHCSVCDNCVEEFDHHCPWVNNCIGRRNYRYFFLFLL. The active-site S-palmitoyl cysteine intermediate is cysteine 134. Residues 149-169 form a helical membrane-spanning segment; that stretch reads FFLFLLSLTAHIMGVFGFGLL. Residues 170–191 are Extracellular-facing; sequence YVLCHIEELSGVRTAVTMAVMC. A helical transmembrane segment spans residues 192 to 212; it reads VAGLFFIPVAGLTGFHVVLVA. Over 213–715 the chain is Cytoplasmic; that stretch reads RGRTTNEQVT…VGGTTYEISV (503 aa). Serine 247 is modified (phosphoserine). Positions 289 to 715 are disordered; it reads GELRRTKSKG…VGGTTYEISV (427 aa). Threonine 294 carries the phosphothreonine modification. A phosphoserine mark is found at serine 296 and serine 299. The residue at position 303 (threonine 303) is a Phosphothreonine. Phosphoserine is present on serine 345. Residues threonine 348 and threonine 350 each carry the phosphothreonine modification. Low complexity predominate over residues 359–373; it reads SSSSTSAAMPHSSSA. A phosphoserine mark is found at serine 380, serine 398, serine 406, and serine 409. Position 411 is a phosphothreonine (threonine 411). A phosphoserine mark is found at serine 415, serine 425, serine 429, and serine 432. Over residues 422-432 the composition is skewed to low complexity; the sequence is SSGSRSSSLKS. A Phosphothreonine modification is found at threonine 436. Polar residues predominate over residues 442-478; the sequence is QLQSIRSEGTTSTSYKSLANQTRNGSLSYDSLLTPSD. Phosphoserine is present on residues serine 529 and serine 554. The segment covering 581–597 has biased composition (low complexity); it reads PRTSSSSDDSKRSPLSK. The residue at position 617 (arginine 617) is an Omega-N-methylarginine. Serine 621 carries the phosphoserine modification. Threonine 659 carries the post-translational modification Phosphothreonine. The segment covering 666–677 has biased composition (polar residues); sequence LKTTYSKSNGQP. Serine 684 and serine 694 each carry phosphoserine. Arginine 697 bears the Omega-N-methylarginine mark.

This sequence belongs to the DHHC palmitoyltransferase family. ERF2/ZDHHC9 subfamily. Autopalmitoylated. Palmitoylation of the C-terminal tail regulates stimulation-dependent plasma membrane motility. In terms of processing, phosphorylation regulates association with endocytic proteins and its subcellular localization. Phosphorylation by LYN during fatty acid uptake leads to inactivation of the activity.

The protein resides in the cell membrane. The enzyme catalyses L-cysteinyl-[protein] + hexadecanoyl-CoA = S-hexadecanoyl-L-cysteinyl-[protein] + CoA. Palmitoyltransferase that catalyzes the addition of palmitate onto various protein substrates such as CTNND2, CD36, GSDMD, NLRP3, NOD1, NOD2, STAT3 and S1PR1 thus plays a role in various biological processes including cell adhesion, inflammation, fatty acid uptake, bacterial sensing or cardiac functions. Plays an important role in the regulation of synapse efficacy by mediating palmitoylation of delta-catenin/CTNND2, thereby increasing synaptic delivery and surface stabilization of alpha-amino-3-hydroxy-5-methyl-4-isoxazole propionic acid receptors (AMPARs). Under basal conditions, remains at the synaptic membrane through FYN-mediated phosphorylation that prevents association with endocytic proteins. Neuronal activity enhances the internalization and trafficking of DHHC5 from spines to dendritic shafts where it palmitoylates delta-catenin/CTNND2. Regulates cell adhesion at the plasma membrane by palmitoylating GOLGA7B and DSG2. Plays a role in innate immune response by mediating the palmitoylation of NOD1 and NOD2 and their proper recruitment to the bacterial entry site and phagosomes. Also participates in fatty acid uptake by palmitoylating CD36 and thereby targeting it to the plasma membrane. Upon binding of fatty acids to CD36, gets phosphorylated by LYN leading to inactivation and subsequent CD36 caveolar endocytosis. Controls oligodendrocyte development by catalyzing STAT3 palmitoylation. Acts as a regulator of inflammatory response by mediating palmitoylation of NLRP3 and GSDMD. Palmitoylates NLRP3 to promote inflammasome assembly and activation. Activates pyroptosis by catalyzing palmitoylation of gasdermin-D (GSDMD), thereby promoting membrane translocation and pore formation of GSDMD. In Rattus norvegicus (Rat), this protein is Palmitoyltransferase ZDHHC5 (Zdhhc5).